The sequence spans 1616 residues: Protein Shroom2 (1616 aa).

The 83-residue stretch at 26 to 108 (LVEVQLSGGA…TLKLVVKRRS (83 aa)) folds into the PDZ domain. Disordered regions lie at residues 128 to 159 (ELAA…LSSS) and 183 to 229 (HPSS…KADT). Low complexity predominate over residues 150-159 (SSSSHDLSSS). 2 stretches are compositionally biased toward polar residues: residues 186 to 197 (SRLSVAKSNSSI) and 220 to 229 (PDHTLSKADT). Phosphoserine is present on S231. A compositionally biased stretch (low complexity) spans 247–259 (QGGRQAQAAGDPQ). 8 disordered regions span residues 247-475 (QGGR…SGWQ), 502-678 (GALE…PLAG), 695-790 (TSFK…SEDT), 802-869 (EETS…LPRR), 881-1100 (KEQR…PSPA), 1115-1184 (PSVF…LTDK), 1268-1302 (AEPE…PGLS), and 1363-1389 (QRRK…VPAA). The segment covering 312–321 (SSPPPPPPPL) has biased composition (pro residues). S313 and S325 each carry phosphoserine. Over residues 343 to 356 (AAAAQHFTALAQAQ) the composition is skewed to low complexity. The segment covering 358–370 (RGDRRPELTDRPW) has biased composition (basic and acidic residues). Low complexity predominate over residues 405–415 (SSRLQASLSSS). S413 is modified (phosphoserine). The ASD1 domain occupies 684-773 (LKEAQARVLR…SEPEKMNEVG (90 aa)). 2 stretches are compositionally biased toward basic and acidic residues: residues 754 to 770 (FTAE…EKMN) and 821 to 830 (IPRDKPERPR). Positions 842 to 854 (WSRTTSLGDSLNA) are enriched in polar residues. Phosphoserine occurs at positions 851, 897, 921, 922, and 924. The residue at position 925 (T925) is a Phosphothreonine. Over residues 926 to 958 (DHYKQEASVELRRQAGDPGEPREELPSAVRAEE) the composition is skewed to basic and acidic residues. At S974 the chain carries Phosphoserine. A compositionally biased stretch (polar residues) spans 975 to 994 (PGSQQHPPSQKAPNPPTFSE). 2 positions are modified to phosphoserine: S1036 and S1039. Basic and acidic residues predominate over residues 1068–1077 (PKREPRRYRA). The span at 1159 to 1176 (LRLQTATMETSRSPSPQF) shows a compositional bias: polar residues. A phosphoserine mark is found at S1171, S1173, and S1297. In terms of domain architecture, ASD2 spans 1317-1611 (EELAREIVGK…QLKCLLDSLQ (295 aa)).

Belongs to the shroom family. As to quaternary structure, interacts with F-actin. As to expression, abundant in retina and melanoma; also in brain, placenta, lung, kidney and pancreas.

The protein localises to the apical cell membrane. Its subcellular location is the cell junction. It is found in the tight junction. The protein resides in the cytoplasm. It localises to the cytoskeleton. In terms of biological role, may be involved in endothelial cell morphology changes during cell spreading. In the retinal pigment epithelium, may regulate the biogenesis of melanosomes and promote their association with the apical cell surface by inducing gamma-tubulin redistribution. The polypeptide is Protein Shroom2 (SHROOM2) (Homo sapiens (Human)).